The sequence spans 274 residues: Protein-export membrane protein SecF (274 aa).

6 helical membrane-spanning segments follow: residues 14 to 34 (LLILTMVFAVICAGSTLALGV), 121 to 141 (SVKVAVPLALVAVSIVVFAIF), 143 to 163 (KPLLSAAVLGALALDLVDALG), 175 to 197 (ASFAGLLMIIGYAVDSNILLSMY), 217 to 237 (TGITMVATTTAAACALFLLSM), and 247 to 267 (VVIFGLIADVLNTWIFNAWVI).

The protein belongs to the SecD/SecF family. SecF subfamily. Part of the protein translocation apparatus. Forms a complex with SecD.

It localises to the cell membrane. In terms of biological role, involved in protein export. The polypeptide is Protein-export membrane protein SecF (Methanopyrus kandleri (strain AV19 / DSM 6324 / JCM 9639 / NBRC 100938)).